Consider the following 491-residue polypeptide: Nucleoside transporter 1.1 (491 aa).

The next 6 membrane-spanning stretches (helical) occupy residues 27–47, 82–102, 109–129, 136–156, 173–193, and 209–229; these read FYVY…VNAV, YNLI…LSWF, VRLL…MVVP, AGAV…KSIF, STMM…QIIV, and KIYY…LILL. The segment covering 260 to 273 has biased composition (basic and acidic residues); it reads CHTDEHPTHDKEGR. Disordered stretches follow at residues 260–280 and 290–309; these read CHTD…SGKE and AAAK…PHEV. Asparagine 274 is a glycosylation site (N-linked (GlcNAc...) asparagine). Transmembrane regions (helical) follow at residues 333–353, 361–381, 395–415, 427–447, and 460–480; these read MFVA…GIAV, WFST…RFSP, WIIV…LLHS, VMEV…LVLG, and FVAG…GTVL.

It belongs to the SLC29A/ENT transporter (TC 2.A.57) family.

It is found in the membrane. The catalysed reaction is adenosine(in) + H(+)(in) = adenosine(out) + H(+)(out). It carries out the reaction uridine(in) + H(+)(in) = uridine(out) + H(+)(out). In terms of biological role, sodium-independent high affinity nucleoside:H(+) symporter; transports adenosine and uridine. Can transport cytidine and thymidine. This is Nucleoside transporter 1.1 from Leishmania donovani.